The chain runs to 79 residues: Transcriptional regulator SplA (79 aa).

Its function is as follows. Regulator of the spore photoproduct lyase operon (splAB). This chain is Transcriptional regulator SplA (splA), found in Bacillus subtilis (strain 168).